A 394-amino-acid polypeptide reads, in one-letter code: Phosphatidylinositol 4-phosphate 5-kinase-like protein 1 (394 aa).

Residues Asp36–Thr393 enclose the PIPK domain.

As to quaternary structure, heterodimerizes with other type I phosphatidylinositol 4-phosphate 5-kinase.

It localises to the cytoplasm. The protein localises to the membrane. The catalysed reaction is a 1,2-diacyl-sn-glycero-3-phospho-(1D-myo-inositol 4-phosphate) + ATP = a 1,2-diacyl-sn-glycero-3-phospho-(1D-myo-inositol-4,5-bisphosphate) + ADP + H(+). In terms of biological role, may act as a scaffold to localize and regulate type I PI(4)P 5-kinases to specific compartments within the cell, where they generate PI(4,5)P2 for actin nucleation, signaling and scaffold protein recruitment and conversion to PI(3,4,5)P3. This chain is Phosphatidylinositol 4-phosphate 5-kinase-like protein 1 (PIP5KL1), found in Homo sapiens (Human).